The primary structure comprises 130 residues: Small ribosomal subunit protein uS8 (130 aa).

The protein belongs to the universal ribosomal protein uS8 family. In terms of assembly, part of the 30S ribosomal subunit.

One of the primary rRNA binding proteins, it binds directly to 16S rRNA central domain where it helps coordinate assembly of the platform of the 30S subunit. The protein is Small ribosomal subunit protein uS8 of Haloarcula marismortui (strain ATCC 43049 / DSM 3752 / JCM 8966 / VKM B-1809) (Halobacterium marismortui).